The chain runs to 449 residues: Trigger factor (449 aa).

The 86-residue stretch at Gly-162–Pro-247 folds into the PPIase FKBP-type domain. Residues Ala-427–Lys-438 are compositionally biased toward basic residues. Residues Ala-427–Lys-449 are disordered. Residues Ser-439–Lys-449 are compositionally biased toward basic and acidic residues.

The protein belongs to the FKBP-type PPIase family. Tig subfamily.

It localises to the cytoplasm. The enzyme catalyses [protein]-peptidylproline (omega=180) = [protein]-peptidylproline (omega=0). Functionally, involved in protein export. Acts as a chaperone by maintaining the newly synthesized protein in an open conformation. Functions as a peptidyl-prolyl cis-trans isomerase. This is Trigger factor from Lactobacillus gasseri (strain ATCC 33323 / DSM 20243 / BCRC 14619 / CIP 102991 / JCM 1131 / KCTC 3163 / NCIMB 11718 / NCTC 13722 / AM63).